The following is a 235-amino-acid chain: Flavonoid 3',5'-methyltransferase (235 aa).

S-adenosyl-L-methionine is bound by residues Val51, Glu73, 75-76 (GV), Ser81, Asp99, and Ala128. Asp151 provides a ligand contact to a divalent metal cation. Position 153 (Asp153) interacts with S-adenosyl-L-methionine. Residues Asp177 and Asn178 each coordinate a divalent metal cation.

Belongs to the class I-like SAM-binding methyltransferase superfamily. Cation-dependent O-methyltransferase family. CCoAMT subfamily. A divalent metal cation is required as a cofactor.

It is found in the cytoplasm. The enzyme catalyses S-adenosyl-L-methionine + a 3'-hydroxyflavonoid = S-adenosyl-L-homocysteine + a 3'-methoxyflavonoid.. It carries out the reaction S-adenosyl-L-methionine + a 5'-hydroxy-3'-methoxyflavonoid = S-adenosyl-L-homocysteine + a 3',5'-dimethoxyflavonoid.. It functions in the pathway pigment biosynthesis; anthocyanin biosynthesis. Mediates O-methylation of anthocyanins. Anthocyanins are major pigments in grapes: at ripening initiation in red grapevine berries, the exocarp turns color from green to red and then to purple due to the accumulation and extent of methylation of anthocyanins. Catalyzes both 3' and 5' O-methylation of anthocyanins, with a preference for glycosylated substrates. Active on both anthocyanins and flavonols in vitro. Most active with delphinidin 3-glucoside but also acts on cyanidin 3-glucoside, cyanidin, myricetin, quercetin and quercetin 3-glucoside. Not able to methylate flavan type skeletons with chiral centers, such as catechins or dihydroquercetin. In Vitis vinifera (Grape), this protein is Flavonoid 3',5'-methyltransferase (FAOMT).